Reading from the N-terminus, the 412-residue chain is Glucose-1-phosphate adenylyltransferase (412 aa).

Alpha-D-glucose 1-phosphate is bound by residues Gly163, 179-180 (EK), and Ser197.

Belongs to the bacterial/plant glucose-1-phosphate adenylyltransferase family. Homotetramer.

It catalyses the reaction alpha-D-glucose 1-phosphate + ATP + H(+) = ADP-alpha-D-glucose + diphosphate. The protein operates within glycan biosynthesis; glycogen biosynthesis. Its function is as follows. Involved in the biosynthesis of ADP-glucose, a building block required for the elongation reactions to produce glycogen. Catalyzes the reaction between ATP and alpha-D-glucose 1-phosphate (G1P) to produce pyrophosphate and ADP-Glc. This chain is Glucose-1-phosphate adenylyltransferase, found in Frankia casuarinae (strain DSM 45818 / CECT 9043 / HFP020203 / CcI3).